A 507-amino-acid chain; its full sequence is RNA-binding protein Nova-1 (507 aa).

The interval 1-44 is disordered; that stretch reads MMAAAPIQQNGTHTGVPIDLDPPDSRKRPLEAPPEAGSTKRTNT. The Bipartite nuclear localization signal signature appears at 27-43; it reads KRPLEAPPEAGSTKRTN. The region spanning 49-116 is the KH 1 domain; it reads QYFLKVLIPS…EALNAVHGFI (68 aa). Residues 139 to 171 form a disordered region; it reads QTTVNPDRIKQTLPSSPTTTKSSPSDPMTTSRA. The span at 150 to 169 shows a compositional bias: low complexity; it reads TLPSSPTTTKSSPSDPMTTS. Ser-154 is subject to Phosphoserine. KH domains follow at residues 171 to 237 and 421 to 488; these read ANQV…VELI and KDVV…QYLI. A required for RNA binding region spans residues 419-503; it reads GSKDVVEIAV…YEQGVRAANP (85 aa).

In terms of assembly, interacts with PTBP2; the interaction is direct. In terms of tissue distribution, expressed in neurons of the cortex, sub-cortex, cerebellum and brainstem (at protein level). Expressed in motor neurons, but not in glia.

It localises to the nucleus. Its function is as follows. Functions to regulate alternative splicing in neurons by binding pre-mRNA in a sequence-specific manner to activate exon inclusion or exclusion. It binds specifically to the sequences 5'-YCAY-3' and regulates splicing in only a subset of regulated exons. Binding to an exonic 5'-YCAY-3' cluster changes the protein complexes assembled on pre-mRNA, blocking U1 snRNP binding and exon inclusion, whereas binding to an intronic 5'-YCAY-3' cluster enhances spliceosome assembly and exon inclusion. Binding to 5'-YCAY-3' clusters results in a local and asymmetric action to regulate spliceosome assembly and alternative splicing in neurons. Binding to an exonic 5'-YCAY-3' cluster changed the protein complexes assembled on pre-mRNA, blocking U1 snRNP (small nuclear ribonucleoprotein) binding and exon inclusion, whereas binding to an intronic 5'-YCAY-3' cluster enhanced spliceosome assembly and exon inclusion. With NOVA1, they perform unique biological functions in different brain areas and cell types. Autoregulates its own expression by acting as a splicing repressor. Acts to activate the inclusion of exon E3A in the glycine receptor alpha-2 chain and of exon E9 in gamma-aminobutyric-acid receptor gamma-2 subunit via a distal downstream UCAU-rich intronic splicing enhancer. Acts to regulate a novel glycine receptor alpha-2 chain splice variant (alpha-2N) in developing spinal cord. The polypeptide is RNA-binding protein Nova-1 (Mus musculus (Mouse)).